The chain runs to 239 residues: Protein TrbH (239 aa).

A helical membrane pass occupies residues 208 to 228 (TVVSIICLLMWICLVYIHCGI).

The protein resides in the cell inner membrane. This is Protein TrbH (trbH) from Escherichia coli (strain K12).